Consider the following 143-residue polypeptide: SsrA-binding protein (143 aa).

It belongs to the SmpB family.

It localises to the cytoplasm. Its function is as follows. Required for rescue of stalled ribosomes mediated by trans-translation. Binds to transfer-messenger RNA (tmRNA), required for stable association of tmRNA with ribosomes. tmRNA and SmpB together mimic tRNA shape, replacing the anticodon stem-loop with SmpB. tmRNA is encoded by the ssrA gene; the 2 termini fold to resemble tRNA(Ala) and it encodes a 'tag peptide', a short internal open reading frame. During trans-translation Ala-aminoacylated tmRNA acts like a tRNA, entering the A-site of stalled ribosomes, displacing the stalled mRNA. The ribosome then switches to translate the ORF on the tmRNA; the nascent peptide is terminated with the 'tag peptide' encoded by the tmRNA and targeted for degradation. The ribosome is freed to recommence translation, which seems to be the essential function of trans-translation. The sequence is that of SsrA-binding protein from Mycoplasmopsis synoviae (strain 53) (Mycoplasma synoviae).